Consider the following 188-residue polypeptide: ATP synthase subunit delta (188 aa).

The protein belongs to the ATPase delta chain family. F-type ATPases have 2 components, F(1) - the catalytic core - and F(0) - the membrane proton channel. F(1) has five subunits: alpha(3), beta(3), gamma(1), delta(1), epsilon(1). F(0) has three main subunits: a(1), b(2) and c(10-14). The alpha and beta chains form an alternating ring which encloses part of the gamma chain. F(1) is attached to F(0) by a central stalk formed by the gamma and epsilon chains, while a peripheral stalk is formed by the delta and b chains.

The protein resides in the cell inner membrane. In terms of biological role, f(1)F(0) ATP synthase produces ATP from ADP in the presence of a proton or sodium gradient. F-type ATPases consist of two structural domains, F(1) containing the extramembraneous catalytic core and F(0) containing the membrane proton channel, linked together by a central stalk and a peripheral stalk. During catalysis, ATP synthesis in the catalytic domain of F(1) is coupled via a rotary mechanism of the central stalk subunits to proton translocation. This protein is part of the stalk that links CF(0) to CF(1). It either transmits conformational changes from CF(0) to CF(1) or is implicated in proton conduction. This Rhizobium meliloti (strain 1021) (Ensifer meliloti) protein is ATP synthase subunit delta.